Reading from the N-terminus, the 323-residue chain is uncharacterized protein (323 aa).

Its subcellular location is the mitochondrion. This is an uncharacterized protein from Schizosaccharomyces pombe (strain 972 / ATCC 24843) (Fission yeast).